The primary structure comprises 359 residues: uncharacterized protein (359 aa).

The first 17 residues, 1-17 (MLGRSLTSVLIVPTGIG), serve as a signal peptide directing secretion. Residue Cys18 is the site of N-palmitoyl cysteine attachment. Cys18 carries the S-diacylglycerol cysteine lipid modification.

It localises to the cell membrane. This is an uncharacterized protein from Synechococcus sp. (strain ATCC 27144 / PCC 6301 / SAUG 1402/1) (Anacystis nidulans).